A 910-amino-acid polypeptide reads, in one-letter code: Dynein axonemal assembly factor 1 homolog (910 aa).

LRR repeat units follow at residues 43–64 (GLKCLWLECNAISNISGLDHQS), 65–86 (QLRCLYLHNNLIKKIENLQHCK), 87–108 (QLDTLNLSHNHIAKIENCGSDI), 111–132 (VLNTLNISHNYLKSIESLAELR), and 136–157 (FVSVLDISHNRIEDIAIVKVLA). Positions 171 to 209 (PVVNDIPSYRKTLILECKSLTYLDSRPVFDKDRACAEAW) constitute an LRRCT domain. The segment covering 217–230 (ERKEHQRWKKEEQR) has biased composition (basic and acidic residues). Disordered stretches follow at residues 217-275 (ERKE…GDFE), 297-332 (TKGDTQQAQKLAEERKASTNSVDYITGSDSNSDPTL), 344-399 (SRAC…GSIL), 620-642 (EQVPDEVEANDKASDATIDPVDQ), 662-682 (QVEVGPSDPKDATTSKPIPEE), and 855-910 (EELE…QGDH). The span at 314–331 (STNSVDYITGSDSNSDPT) shows a compositional bias: polar residues. Residues 380–389 (SLSDSSSSSS) are compositionally biased toward low complexity. Basic and acidic residues predominate over residues 620 to 633 (EQVPDEVEANDKAS). Over residues 855–865 (EELEELNEEED) the composition is skewed to acidic residues. Over residues 866-878 (PALKEAGDFKHDE) the composition is skewed to basic and acidic residues.

This sequence belongs to the DNAAF1 family.

The protein resides in the cell projection. The protein localises to the cilium. Functionally, cilium-specific protein required for cilia structures. This Anopheles gambiae (African malaria mosquito) protein is Dynein axonemal assembly factor 1 homolog.